Reading from the N-terminus, the 133-residue chain is Vesicle transport protein GOT1A (133 aa).

Over 1-9 the chain is Cytoplasmic; that stretch reads MISITEWQK. Residues 10–30 form a helical membrane-spanning segment; the sequence is IGVGITGFGVFFILFGILLYF. Asp-31 is a topological domain (lumenal). The helical transmembrane segment at 32–52 threads the bilayer; the sequence is SVLLAFGNLLFLTGLSLIIGL. At 53–68 the chain is on the cytoplasmic side; that stretch reads RRTFAFFFQRHKLKGT. Residues 69-89 form a helical membrane-spanning segment; that stretch reads SFFLGGVAIVLLRWPLLGMLL. Residues 90–92 are Lumenal-facing; it reads EAY. Residues 93–113 traverse the membrane as a helical segment; sequence GFISLFKGFFPVVFGFLGSAF. Residues 114–133 lie on the Cytoplasmic side of the membrane; the sequence is NIPFLSTLFQKLQGSSSSMV.

The protein belongs to the GOT1 family.

The protein resides in the golgi apparatus membrane. Functionally, may be involved in fusion of ER-derived transport vesicles with the Golgi complex. In Mus musculus (Mouse), this protein is Vesicle transport protein GOT1A.